The chain runs to 97 residues: Aspartyl/glutamyl-tRNA(Asn/Gln) amidotransferase subunit C (97 aa).

This sequence belongs to the GatC family. Heterotrimer of A, B and C subunits.

It catalyses the reaction L-glutamyl-tRNA(Gln) + L-glutamine + ATP + H2O = L-glutaminyl-tRNA(Gln) + L-glutamate + ADP + phosphate + H(+). The catalysed reaction is L-aspartyl-tRNA(Asn) + L-glutamine + ATP + H2O = L-asparaginyl-tRNA(Asn) + L-glutamate + ADP + phosphate + 2 H(+). Functionally, allows the formation of correctly charged Asn-tRNA(Asn) or Gln-tRNA(Gln) through the transamidation of misacylated Asp-tRNA(Asn) or Glu-tRNA(Gln) in organisms which lack either or both of asparaginyl-tRNA or glutaminyl-tRNA synthetases. The reaction takes place in the presence of glutamine and ATP through an activated phospho-Asp-tRNA(Asn) or phospho-Glu-tRNA(Gln). The sequence is that of Aspartyl/glutamyl-tRNA(Asn/Gln) amidotransferase subunit C from Prochlorococcus marinus (strain MIT 9303).